The chain runs to 116 residues: Ribosome-binding factor A (116 aa).

Belongs to the RbfA family. As to quaternary structure, monomer. Binds 30S ribosomal subunits, but not 50S ribosomal subunits or 70S ribosomes.

It is found in the cytoplasm. One of several proteins that assist in the late maturation steps of the functional core of the 30S ribosomal subunit. Associates with free 30S ribosomal subunits (but not with 30S subunits that are part of 70S ribosomes or polysomes). Required for efficient processing of 16S rRNA. May interact with the 5'-terminal helix region of 16S rRNA. The protein is Ribosome-binding factor A of Chlorobium phaeobacteroides (strain BS1).